Here is a 293-residue protein sequence, read N- to C-terminus: Ribosomal RNA small subunit methyltransferase H (293 aa).

S-adenosyl-L-methionine is bound by residues 32-34, aspartate 51, phenylalanine 78, aspartate 99, and glutamine 106; that span reads GGH. The interval 272-293 is disordered; sequence SDEEIKENPASRSAKLRVGRRI.

Belongs to the methyltransferase superfamily. RsmH family.

It localises to the cytoplasm. It catalyses the reaction cytidine(1402) in 16S rRNA + S-adenosyl-L-methionine = N(4)-methylcytidine(1402) in 16S rRNA + S-adenosyl-L-homocysteine + H(+). In terms of biological role, specifically methylates the N4 position of cytidine in position 1402 (C1402) of 16S rRNA. The protein is Ribosomal RNA small subunit methyltransferase H of Sulfurihydrogenibium sp. (strain YO3AOP1).